The chain runs to 213 residues: KHG/KDPG aldolase (213 aa).

The active-site Proton acceptor is the E45. Residues R49, T73, and K133 each coordinate pyruvate. Residue K133 is the Schiff-base intermediate with substrate of the active site.

It belongs to the KHG/KDPG aldolase family. Homotrimer.

It localises to the cytoplasm. The catalysed reaction is 2-dehydro-3-deoxy-6-phospho-D-gluconate = D-glyceraldehyde 3-phosphate + pyruvate. It carries out the reaction (4S)-4-hydroxy-2-oxoglutarate = glyoxylate + pyruvate. It participates in carbohydrate acid metabolism; 2-dehydro-3-deoxy-D-gluconate degradation; D-glyceraldehyde 3-phosphate and pyruvate from 2-dehydro-3-deoxy-D-gluconate: step 2/2. It functions in the pathway carbohydrate metabolism; glyoxylate and dicarboxylate metabolism. Its function is as follows. Involved in the degradation of glucose via the Entner-Doudoroff pathway. Catalyzes the reversible, stereospecific retro-aldol cleavage of 2-keto-3-deoxy-6-phosphogluconate (KDPG) to pyruvate and D-glyceraldehyde-3-phosphate. In addition to its KDPG aldolase activity, catalyzes the reversible cleavage of 2-keto-4-hydroxyglutarate (KHG) to glyoxylate and pyruvate. The enzyme is stereoselective for the S-enantiomer of KHG. Cleavage of KHG could serve in tricarboxylic acid (TCA) cycle regulation or, when operating in the reverse direction, in the detoxification of glyoxylate. The polypeptide is KHG/KDPG aldolase (eda) (Escherichia coli O157:H7).